The primary structure comprises 227 residues: Large ribosomal subunit protein uL10c (227 aa).

The transit peptide at 1–47 directs the protein to the chloroplast; the sequence is MEATFFTLPSSTSHSYPFSLKSHFNNSLTLPTHPHFKPKSKNLTIRS.

The protein belongs to the universal ribosomal protein uL10 family. Part of the 50S ribosomal subunit.

It localises to the plastid. The protein resides in the chloroplast. This protein binds directly to 23S ribosomal RNA. In Nicotiana tabacum (Common tobacco), this protein is Large ribosomal subunit protein uL10c (RPL10).